We begin with the raw amino-acid sequence, 145 residues long: MIALIQRVSEANVVVDGETIGEIDKGLLVLLGVEREDDLAKMEKLATKVMSYRVFSDDNGKMNLNLEQAGGSLLVVSQFTLAADTGRGLRPSFSGAGTPEQARELYQAFVDFCLSKGVNTQTGEFAADMKVSLVNDGPVTFNLQV.

The short motif at Gly-137 to Pro-138 is the Gly-cisPro motif, important for rejection of L-amino acids element.

This sequence belongs to the DTD family. Homodimer.

Its subcellular location is the cytoplasm. It carries out the reaction glycyl-tRNA(Ala) + H2O = tRNA(Ala) + glycine + H(+). It catalyses the reaction a D-aminoacyl-tRNA + H2O = a tRNA + a D-alpha-amino acid + H(+). Functionally, an aminoacyl-tRNA editing enzyme that deacylates mischarged D-aminoacyl-tRNAs. Also deacylates mischarged glycyl-tRNA(Ala), protecting cells against glycine mischarging by AlaRS. Acts via tRNA-based rather than protein-based catalysis; rejects L-amino acids rather than detecting D-amino acids in the active site. By recycling D-aminoacyl-tRNA to D-amino acids and free tRNA molecules, this enzyme counteracts the toxicity associated with the formation of D-aminoacyl-tRNA entities in vivo and helps enforce protein L-homochirality. In Shewanella piezotolerans (strain WP3 / JCM 13877), this protein is D-aminoacyl-tRNA deacylase.